The following is a 293-amino-acid chain: Ribosomal protein L11 methyltransferase (293 aa).

Threonine 145, glycine 166, aspartate 188, and asparagine 230 together coordinate S-adenosyl-L-methionine.

This sequence belongs to the methyltransferase superfamily. PrmA family.

It localises to the cytoplasm. It catalyses the reaction L-lysyl-[protein] + 3 S-adenosyl-L-methionine = N(6),N(6),N(6)-trimethyl-L-lysyl-[protein] + 3 S-adenosyl-L-homocysteine + 3 H(+). Functionally, methylates ribosomal protein L11. In Shewanella baltica (strain OS195), this protein is Ribosomal protein L11 methyltransferase.